A 382-amino-acid polypeptide reads, in one-letter code: Chaperone protein DnaJ 1 (382 aa).

Residues 4 to 68 (DYYGILGVDR…DKRRIVDMGG (65 aa)) enclose the J domain. The segment at 134–216 (GAKKDLTLDT…CAGDGRVRAR (83 aa)) adopts a CR-type zinc-finger fold. 8 residues coordinate Zn(2+): Cys-147, Cys-150, Cys-164, Cys-167, Cys-190, Cys-193, Cys-204, and Cys-207. 4 CXXCXGXG motif repeats span residues 147–154 (CTKCHGSG), 164–171 (CGTCNGAG), 190–197 (CHTCDGTG), and 204–211 (CTECAGDG).

It belongs to the DnaJ family. As to quaternary structure, homodimer. Zn(2+) is required as a cofactor.

Its subcellular location is the cytoplasm. In terms of biological role, participates actively in the response to hyperosmotic and heat shock by preventing the aggregation of stress-denatured proteins and by disaggregating proteins, also in an autonomous, DnaK-independent fashion. Unfolded proteins bind initially to DnaJ; upon interaction with the DnaJ-bound protein, DnaK hydrolyzes its bound ATP, resulting in the formation of a stable complex. GrpE releases ADP from DnaK; ATP binding to DnaK triggers the release of the substrate protein, thus completing the reaction cycle. Several rounds of ATP-dependent interactions between DnaJ, DnaK and GrpE are required for fully efficient folding. Also involved, together with DnaK and GrpE, in the DNA replication of plasmids through activation of initiation proteins. The polypeptide is Chaperone protein DnaJ 1 (Corynebacterium glutamicum (strain ATCC 13032 / DSM 20300 / JCM 1318 / BCRC 11384 / CCUG 27702 / LMG 3730 / NBRC 12168 / NCIMB 10025 / NRRL B-2784 / 534)).